The chain runs to 145 residues: Bacilliredoxin SAR1441 (145 aa).

This sequence belongs to the bacilliredoxin family.

The polypeptide is Bacilliredoxin SAR1441 (Staphylococcus aureus (strain MRSA252)).